The primary structure comprises 1076 residues: Nickel-cobalt-cadmium resistance protein NccA (1076 aa).

12 helical membrane passes run 14 to 34 (WLVL…LNLL), 367 to 387 (VAKN…ALLG), 391 to 411 (AAVI…IGMN), 419 to 439 (LMSL…IIVE), 476 to 496 (TVYG…FQGV), 503 to 523 (PMVI…LTFV), 562 to 582 (MPFL…FTFV), 904 to 924 (LAII…MAIG), 929 to 949 (TATV…ALVL), 960 to 980 (VGFI…ISAI), 1004 to 1024 (PVLM…IATG), and 1036 to 1056 (VVIG…PAVC).

The protein belongs to the resistance-nodulation-cell division (RND) (TC 2.A.6) family.

The protein localises to the cell membrane. Its function is as follows. Component of the NCC cation-efflux system that confers resistance to nickel, cobalt and cadmium. May form a membrane tunnel, which allows ion transport across the membrane. The polypeptide is Nickel-cobalt-cadmium resistance protein NccA (nccA) (Alcaligenes xylosoxydans xylosoxydans (Achromobacter xylosoxidans)).